Reading from the N-terminus, the 297-residue chain is Urease accessory protein UreD (297 aa).

Belongs to the UreD family. As to quaternary structure, ureD, UreF and UreG form a complex that acts as a GTP-hydrolysis-dependent molecular chaperone, activating the urease apoprotein by helping to assemble the nickel containing metallocenter of UreC. The UreE protein probably delivers the nickel.

The protein localises to the cytoplasm. Its function is as follows. Required for maturation of urease via the functional incorporation of the urease nickel metallocenter. The protein is Urease accessory protein UreD of Anaeromyxobacter sp. (strain Fw109-5).